The sequence spans 161 residues: RNA pyrophosphohydrolase (161 aa).

The Nudix hydrolase domain maps to Gly6–Val149. The Nudix box signature appears at Gly38 to Gly59.

This sequence belongs to the Nudix hydrolase family. RppH subfamily. A divalent metal cation serves as cofactor.

Functionally, accelerates the degradation of transcripts by removing pyrophosphate from the 5'-end of triphosphorylated RNA, leading to a more labile monophosphorylated state that can stimulate subsequent ribonuclease cleavage. The protein is RNA pyrophosphohydrolase of Acinetobacter baumannii (strain AB307-0294).